Consider the following 57-residue polypeptide: MAITCMDIPKFLFALLLPPVGVFLEKGCTHHLAICILLTILGYIPGIIYACYIILAY.

Helical transmembrane passes span 3-23 and 36-56; these read ITCMDIPKFLFALLLPPVGVF and ILLTILGYIPGIIYACYIILA.

The protein belongs to the UPF0057 (PMP3) family.

Its subcellular location is the membrane. The sequence is that of UPF0057 membrane protein T23F2.4 from Caenorhabditis elegans.